The primary structure comprises 381 residues: Spermidine/putrescine import ATP-binding protein PotA (381 aa).

The region spanning 22 to 252 is the ABC transporter domain; that stretch reads VELRNVFKFF…PKTSFVADFI (231 aa). An ATP-binding site is contributed by 54–61; it reads GPSGCGKT.

Belongs to the ABC transporter superfamily. Spermidine/putrescine importer (TC 3.A.1.11.1) family. The complex is composed of two ATP-binding proteins (PotA), two transmembrane proteins (PotB and PotC) and a solute-binding protein (PotD).

It localises to the cell inner membrane. The enzyme catalyses ATP + H2O + polyamine-[polyamine-binding protein]Side 1 = ADP + phosphate + polyamineSide 2 + [polyamine-binding protein]Side 1.. Its function is as follows. Part of the ABC transporter complex PotABCD involved in spermidine/putrescine import. Responsible for energy coupling to the transport system. This Trichormus variabilis (strain ATCC 29413 / PCC 7937) (Anabaena variabilis) protein is Spermidine/putrescine import ATP-binding protein PotA.